Consider the following 566-residue polypeptide: Transmembrane protein 151B (566 aa).

The span at 1–11 (MSPPGSAAGES) shows a compositional bias: low complexity. The interval 1–25 (MSPPGSAAGESAAGGGGGGGGPGVS) is disordered. Residues 12–23 (AAGGGGGGGGPG) show a composition bias toward gly residues. The next 2 membrane-spanning stretches (helical) occupy residues 65-85 (CLLLSLLMYGCLGAVAWCHVT) and 112-132 (YVYIPLAFLLMLYAVYLVECW). The segment covering 495-512 (VNEASCPTEQTRLSSQAS) has biased composition (polar residues). The disordered stretch occupies residues 495–529 (VNEASCPTEQTRLSSQASMGDDEDDDEEEAGPPPP). Residues 514–524 (GDDEDDDEEEA) show a composition bias toward acidic residues.

Belongs to the TMEM151 family.

The protein resides in the membrane. The chain is Transmembrane protein 151B (TMEM151B) from Homo sapiens (Human).